Reading from the N-terminus, the 312-residue chain is Non-structural protein 2 (312 aa).

Residues 107-109 (QVR), lysine 185, and 218-220 (HGK) each bind ATP. The segment at 202-238 (FAAYIRYNFNKFAAISHGKRHWRLVLHSQLMSHAERL) is RNA-binding. The For NTPase and RTPase activities role is filled by histidine 222. Residue arginine 224 participates in ATP binding.

The protein belongs to the rotavirus NSP2 family. Homooctamer. Interacts with VP1; this interaction is weak. Interacts with NSP5; this interaction leads to up-regulation of NSP5 phosphorylation and formation of viral factories. Interacts with host DCP1A, DCP1B, DDX6, EDC4 and EIF2S1/eIF2-alpha; these interactions are probably part of the sequestration of some host SGs and PBs proteins in viral factories. It depends on Mg(2+) as a cofactor.

Its subcellular location is the host cytoplasm. Its function is as follows. Participates in replication and packaging of the viral genome. Plays a crucial role, together with NSP5, in the formation of virus factories (viroplasms), which are large inclusions in the host cytoplasm where replication intermediates are assembled and viral RNA replication takes place. Displays ssRNA binding, NTPase, RNA triphosphatase (RTPase) and ATP-independent helix-unwinding activities. The unwinding activity may prepare and organize plus-strand RNAs for packaging and replication by removing interfering secondary structures. The RTPase activity plays a role in the removal of the gamma-phosphate from the rotavirus RNA minus strands of dsRNA genome segments. Participates in the selective exclusion of host proteins from stress granules (SG) and P bodies (PB). Also participates in the sequestration of these remodeled organelles in viral factories. In Rotavirus C (isolate RVC/Human/United Kingdom/Bristol/1989) (RV-C), this protein is Non-structural protein 2.